A 302-amino-acid polypeptide reads, in one-letter code: Decaprenyl-phosphate phosphoribosyltransferase (302 aa).

Lys-28 serves as a coordination point for 5-phospho-alpha-D-ribose 1-diphosphate. Helical transmembrane passes span Val-30–Glu-50 and Val-55–Val-75. Residue Tyr-70 coordinates 5-phospho-alpha-D-ribose 1-diphosphate. Residues Asn-73 and Asp-77 each coordinate Mg(2+). Lys-87 contacts 5-phospho-alpha-D-ribose 1-diphosphate. The next 2 membrane-spanning stretches (helical) occupy residues Trp-100–Leu-120 and Pro-122–Leu-142. 5-phospho-alpha-D-ribose 1-diphosphate contacts are provided by Lys-143 and Arg-160. The next 2 helical transmembrane spans lie at Ala-146–Val-166 and Ile-170–Gly-190. Lys-191 is a trans,octa-cis-decaprenyl phosphate binding site. A run of 3 helical transmembrane segments spans residues Leu-218–Phe-238, Ser-244–Val-264, and Arg-282–Gly-302.

The protein belongs to the UbiA prenyltransferase family. DPPR synthase subfamily. In terms of assembly, homotrimer. Mg(2+) is required as a cofactor.

It is found in the cell inner membrane. It carries out the reaction trans,octa-cis-decaprenyl phosphate + 5-phospho-alpha-D-ribose 1-diphosphate + H(+) = trans,octa-cis-decaprenylphospho-beta-D-ribofuranose 5-phosphate + diphosphate. The protein operates within cell wall biogenesis; cell wall polysaccharide biosynthesis. Functionally, involved in the biosynthesis of decaprenylphosphoryl arabinose (DPA) a precursor for arabinan synthesis in mycobacterial cell wall biosynthesis. Catalyzes the transfer of a 5-phosphoribosyl residue from phosphoribose diphosphate (PRPP) to decaprenyl phosphate (DP) to form decaprenylphosphoryl-5-phosphoribose (DPPR). The polypeptide is Decaprenyl-phosphate phosphoribosyltransferase (Mycobacterium tuberculosis (strain CDC 1551 / Oshkosh)).